The primary structure comprises 191 residues: Threonylcarbamoyl-AMP synthase (191 aa).

One can recognise a YrdC-like domain in the interval 7–191 (QSELNDALKI…FHASTGKRLR (185 aa)).

It belongs to the SUA5 family. TsaC subfamily.

The protein resides in the cytoplasm. The catalysed reaction is L-threonine + hydrogencarbonate + ATP = L-threonylcarbamoyladenylate + diphosphate + H2O. Functionally, required for the formation of a threonylcarbamoyl group on adenosine at position 37 (t(6)A37) in tRNAs that read codons beginning with adenine. Catalyzes the conversion of L-threonine, HCO(3)(-)/CO(2) and ATP to give threonylcarbamoyl-AMP (TC-AMP) as the acyladenylate intermediate, with the release of diphosphate. The sequence is that of Threonylcarbamoyl-AMP synthase from Psychromonas ingrahamii (strain DSM 17664 / CCUG 51855 / 37).